Consider the following 186-residue polypeptide: Ribosome-recycling factor (186 aa).

It belongs to the RRF family.

The protein resides in the cytoplasm. In terms of biological role, responsible for the release of ribosomes from messenger RNA at the termination of protein biosynthesis. May increase the efficiency of translation by recycling ribosomes from one round of translation to another. This is Ribosome-recycling factor from Methylocella silvestris (strain DSM 15510 / CIP 108128 / LMG 27833 / NCIMB 13906 / BL2).